The sequence spans 139 residues: Arsenate reductase (139 aa).

Catalysis depends on nucleophile residues C10, C82, and C89. 2 disulfides stabilise this stretch: C10/C82 and C82/C89.

Belongs to the low molecular weight phosphotyrosine protein phosphatase family. Thioredoxin-coupled ArsC subfamily.

It is found in the cytoplasm. It catalyses the reaction arsenate + [thioredoxin]-dithiol + H(+) = arsenite + [thioredoxin]-disulfide + H2O. Its function is as follows. Catalyzes the reduction of arsenate [As(V)] to arsenite [As(III)]. This is Arsenate reductase from Oceanobacillus iheyensis (strain DSM 14371 / CIP 107618 / JCM 11309 / KCTC 3954 / HTE831).